Reading from the N-terminus, the 156-residue chain is Cyanate hydratase (156 aa).

Catalysis depends on residues arginine 96, glutamate 99, and serine 122.

It belongs to the cyanase family.

It carries out the reaction cyanate + hydrogencarbonate + 3 H(+) = NH4(+) + 2 CO2. Catalyzes the reaction of cyanate with bicarbonate to produce ammonia and carbon dioxide. This chain is Cyanate hydratase, found in Pseudomonas aeruginosa (strain UCBPP-PA14).